The following is a 1076-amino-acid chain: Bifunctional glutamine synthetase adenylyltransferase/adenylyl-removing enzyme (1076 aa).

Residues M1–M521 form an adenylyl removase region. Positions V524–R1076 are adenylyl transferase. Residues T1042–P1056 are compositionally biased toward low complexity. The segment at T1042–R1076 is disordered.

Belongs to the GlnE family. The cofactor is Mg(2+).

It catalyses the reaction [glutamine synthetase]-O(4)-(5'-adenylyl)-L-tyrosine + phosphate = [glutamine synthetase]-L-tyrosine + ADP. The enzyme catalyses [glutamine synthetase]-L-tyrosine + ATP = [glutamine synthetase]-O(4)-(5'-adenylyl)-L-tyrosine + diphosphate. Involved in the regulation of glutamine synthetase GlnA, a key enzyme in the process to assimilate ammonia. When cellular nitrogen levels are high, the C-terminal adenylyl transferase (AT) inactivates GlnA by covalent transfer of an adenylyl group from ATP to specific tyrosine residue of GlnA, thus reducing its activity. Conversely, when nitrogen levels are low, the N-terminal adenylyl removase (AR) activates GlnA by removing the adenylyl group by phosphorolysis, increasing its activity. The regulatory region of GlnE binds the signal transduction protein PII (GlnB) which indicates the nitrogen status of the cell. This is Bifunctional glutamine synthetase adenylyltransferase/adenylyl-removing enzyme from Bifidobacterium longum (strain NCC 2705).